The sequence spans 383 residues: Cyclin-D4-2 (383 aa).

The segment covering 51 to 62 has biased composition (gly residues); it reads AAGGGGGSGGGG. 3 disordered regions span residues 51–70, 313–335, and 354–383; these read AAGG…EDMF, QPKP…PESP, and ATIA…KLSR. A compositionally biased stretch (low complexity) spans 323-335; that stretch reads SASASSSSVPESP.

Belongs to the cyclin family. Cyclin D subfamily.

The chain is Cyclin-D4-2 (CYCD4-2) from Oryza sativa subsp. japonica (Rice).